A 312-amino-acid chain; its full sequence is Methionyl-tRNA formyltransferase (312 aa).

The segment at Pro-34–Ala-54 is disordered. Position 110–113 (Ser-110–Pro-113) interacts with (6S)-5,6,7,8-tetrahydrofolate.

It belongs to the Fmt family.

The catalysed reaction is L-methionyl-tRNA(fMet) + (6R)-10-formyltetrahydrofolate = N-formyl-L-methionyl-tRNA(fMet) + (6S)-5,6,7,8-tetrahydrofolate + H(+). Its function is as follows. Attaches a formyl group to the free amino group of methionyl-tRNA(fMet). The formyl group appears to play a dual role in the initiator identity of N-formylmethionyl-tRNA by promoting its recognition by IF2 and preventing the misappropriation of this tRNA by the elongation apparatus. The chain is Methionyl-tRNA formyltransferase from Mycobacterium tuberculosis (strain ATCC 25177 / H37Ra).